The sequence spans 1556 residues: Lysine-specific demethylase 5C (1556 aa).

The 42-residue stretch at 14 to 55 folds into the JmjN domain; the sequence is CPVFEPSWAEFRDPLGYIAKIRPIAEKSGICKIRPPADWQPP. The ARID domain occupies 79–169; sequence TRVKLNYLDQ…IVYPYEMYQS (91 aa). Over residues 197–207 the composition is skewed to polar residues; it reads LRQSVQPSKFN. Positions 197 to 227 are disordered; sequence LRQSVQPSKFNSYGRRAKRLQPDPEPTEEDI. Residues Lys205, Lys229, Lys244, and Lys274 each participate in a glycyl lysine isopeptide (Lys-Gly) (interchain with G-Cter in SUMO2) cross-link. The disordered stretch occupies residues 257 to 303; the sequence is LRKKDKEGPECPPTVVVKEESGGDVKVESTSPKTFLESKEELSHSPE. The span at 273-283 shows a compositional bias: basic and acidic residues; sequence VKEESGGDVKV. Phosphoserine is present on Ser287. Lys295 participates in a covalent cross-link: Glycyl lysine isopeptide (Lys-Gly) (interchain with G-Cter in SUMO2). Ser301 and Ser317 each carry phosphoserine. A PHD-type 1 zinc finger spans residues 324-374; sequence SYVCRMCSRGDEDDKLLLCDGCDDNYHIFCLLPPLPEIPKGVWRCPKCVMA. Residues 468 to 634 enclose the JmjC domain; that stretch reads EYATSGWNLN…AGRQCIEHYR (167 aa). Fe cation is bound by residues His514, Asp517, and His602. A phosphoserine mark is found at Ser893 and Ser897. Residue Lys1127 forms a Glycyl lysine isopeptide (Lys-Gly) (interchain with G-Cter in SUMO2) linkage. Residues 1185–1250 form a PHD-type 2 zinc finger; sequence TSVCVCGQVP…KFLCPLCMRS (66 aa). 2 disordered regions span residues 1315–1362 and 1441–1556; these read LQAE…SPEK and ERHG…QQQL. Positions 1335–1345 are enriched in basic and acidic residues; it reads PLREGSGKDMP. The residue at position 1359 (Ser1359) is a Phosphoserine. Over residues 1445-1460 the composition is skewed to basic residues; the sequence is SRARGRALERRRRRKV. Residues 1461-1478 are compositionally biased toward basic and acidic residues; it reads DRGGEGDDPAREELEPKR. The segment covering 1485 to 1500 has biased composition (acidic residues); sequence EAEEAQEEEELEEETG. Polar residues-rich tracts occupy residues 1513-1522 and 1530-1540; these read SPSTQENQNG and SGPSAPFSTLS. Residues 1541 to 1556 show a composition bias toward low complexity; it reads PQLHVPCPQQPPQQQL.

It belongs to the JARID1 histone demethylase family. In terms of assembly, part of two distinct complexes, one containing E2F6, and the other containing REST. Interacts with ZMYND8. The cofactor is Fe(2+).

The protein localises to the nucleus. The catalysed reaction is N(6),N(6),N(6)-trimethyl-L-lysyl(4)-[histone H3] + 3 2-oxoglutarate + 3 O2 = L-lysyl(4)-[histone H3] + 3 formaldehyde + 3 succinate + 3 CO2. In terms of biological role, histone demethylase that specifically demethylates 'Lys-4' of histone H3, thereby playing a central role in histone code. Does not demethylate histone H3 'Lys-9', H3 'Lys-27', H3 'Lys-36', H3 'Lys-79' or H4 'Lys-20'. Demethylates trimethylated and dimethylated but not monomethylated H3 'Lys-4'. Participates in transcriptional repression of neuronal genes by recruiting histone deacetylases and REST at neuron-restrictive silencer elements. Represses the CLOCK-BMAL1 heterodimer-mediated transcriptional activation of the core clock component PER2. The protein is Lysine-specific demethylase 5C (KDM5C) of Canis lupus familiaris (Dog).